We begin with the raw amino-acid sequence, 468 residues long: 3-isopropylmalate dehydratase large subunit (468 aa).

3 residues coordinate [4Fe-4S] cluster: Cys-349, Cys-409, and Cys-412.

This sequence belongs to the aconitase/IPM isomerase family. LeuC type 1 subfamily. In terms of assembly, heterodimer of LeuC and LeuD. [4Fe-4S] cluster is required as a cofactor.

It catalyses the reaction (2R,3S)-3-isopropylmalate = (2S)-2-isopropylmalate. The protein operates within amino-acid biosynthesis; L-leucine biosynthesis; L-leucine from 3-methyl-2-oxobutanoate: step 2/4. Catalyzes the isomerization between 2-isopropylmalate and 3-isopropylmalate, via the formation of 2-isopropylmaleate. This is 3-isopropylmalate dehydratase large subunit from Shewanella baltica (strain OS185).